The following is an 85-amino-acid chain: MKVTLIAIVTCAAVLVLHTTAAEELEAESQLMEVGMPDTELAAVDEERLFECSASCEIEKEGNKDCKKKKCKGGWKCKFNMCVKV.

The signal sequence occupies residues 1–22 (MKVTLIAIVTCAAVLVLHTTAA). Positions 23–48 (EELEAESQLMEVGMPDTELAAVDEER) are excised as a propeptide. Cystine bridges form between Cys-52–Cys-66, Cys-56–Cys-77, and Cys-71–Cys-82.

It belongs to the neurotoxin 12 (Hwtx-2) family. 02 (Hwtx-2) subfamily. In terms of tissue distribution, expressed by the venom gland.

Its subcellular location is the secreted. Its function is as follows. Postsynaptic neurotoxin. This Cyriopagopus hainanus (Chinese bird spider) protein is U4-theraphotoxin-Hhn1c.